A 460-amino-acid chain; its full sequence is UDP-N-acetylmuramate--L-alanine ligase (460 aa).

Residue 118–124 (GTHGKTT) coordinates ATP.

This sequence belongs to the MurCDEF family.

It localises to the cytoplasm. The catalysed reaction is UDP-N-acetyl-alpha-D-muramate + L-alanine + ATP = UDP-N-acetyl-alpha-D-muramoyl-L-alanine + ADP + phosphate + H(+). The protein operates within cell wall biogenesis; peptidoglycan biosynthesis. In terms of biological role, cell wall formation. This chain is UDP-N-acetylmuramate--L-alanine ligase, found in Gloeobacter violaceus (strain ATCC 29082 / PCC 7421).